Reading from the N-terminus, the 330-residue chain is Serpentine receptor class J-38 (330 aa).

The next 7 membrane-spanning stretches (helical) occupy residues 6–26, 43–63, 98–118, 135–155, 200–220, 253–273, and 285–305; these read IYIF…PIFV, LLLF…VVPI, LVAS…LVIY, LLLS…LGYA, TIIW…LALL, IPIV…IFGI, and GALG…LPIF.

This sequence belongs to the nematode receptor-like protein srj family.

The protein resides in the membrane. In Caenorhabditis elegans, this protein is Serpentine receptor class J-38 (srj-38).